Here is a 259-residue protein sequence, read N- to C-terminus: tRNA (guanine-N(1)-)-methyltransferase (259 aa).

S-adenosyl-L-methionine-binding positions include Gly-113 and 133–138 (IGDYVL).

This sequence belongs to the RNA methyltransferase TrmD family. Homodimer.

Its subcellular location is the cytoplasm. The catalysed reaction is guanosine(37) in tRNA + S-adenosyl-L-methionine = N(1)-methylguanosine(37) in tRNA + S-adenosyl-L-homocysteine + H(+). Functionally, specifically methylates guanosine-37 in various tRNAs. The chain is tRNA (guanine-N(1)-)-methyltransferase from Xanthomonas oryzae pv. oryzae (strain MAFF 311018).